We begin with the raw amino-acid sequence, 96 residues long: MSRKRIRWTLRALRRLDEIGAYIEKDDPDAAARVVARIGTAVDALAEYPASGRPGRIKSTRELVLADIPYIIPYRISRDVEILTVMHAHQQWPQVL.

The protein belongs to the RelE toxin family.

Toxic component of a type II toxin-antitoxin (TA) system. The chain is Putative toxin Y4kP from Sinorhizobium fredii (strain NBRC 101917 / NGR234).